Reading from the N-terminus, the 1010-residue chain is Trifunctional purine biosynthetic protein adenosine-3 (1010 aa).

At Ala-2 the chain carries N-acetylalanine. Ser-10 bears the Phosphoserine mark. In terms of domain architecture, ATP-grasp spans 111–318 (KEFMDRHGIP…LYEVIQSTLD (208 aa)). Residues 190 to 193 (EELL), Glu-197, Arg-220, and Asn-229 each bind ATP. Mg(2+)-binding residues include Glu-288 and Asn-290. At Lys-350 the chain carries N6-acetyllysine. The interval 434-809 (SLTYKESGVD…HFSFEKKKAR (376 aa)) is AIRS domain. Ser-440 is modified (phosphoserine). Thr-682 carries the phosphothreonine modification. Phosphoserine occurs at positions 796 and 802. The tract at residues 810–1010 (VAVLISGTGS…NGKICWVKEE (201 aa)) is GART domain. Residue 818 to 820 (GSN) coordinates N(1)-(5-phospho-beta-D-ribosyl)glycinamide. (6R)-10-formyltetrahydrofolate-binding positions include Arg-871, 896 to 899 (MRIL), and Asn-913. His-915 (proton donor) is an active-site residue. 947 to 951 (AEDVD) provides a ligand contact to (6R)-10-formyltetrahydrofolate. A N(1)-(5-phospho-beta-D-ribosyl)glycinamide-binding site is contributed by 977–980 (KLAE).

The protein in the N-terminal section; belongs to the GARS family. This sequence in the central section; belongs to the AIR synthase family. In the C-terminal section; belongs to the GART family. As to quaternary structure, homodimer. Mg(2+) serves as cofactor. Mn(2+) is required as a cofactor.

The enzyme catalyses 5-phospho-beta-D-ribosylamine + glycine + ATP = N(1)-(5-phospho-beta-D-ribosyl)glycinamide + ADP + phosphate + H(+). It carries out the reaction N(1)-(5-phospho-beta-D-ribosyl)glycinamide + (6R)-10-formyltetrahydrofolate = N(2)-formyl-N(1)-(5-phospho-beta-D-ribosyl)glycinamide + (6S)-5,6,7,8-tetrahydrofolate + H(+). It catalyses the reaction 2-formamido-N(1)-(5-O-phospho-beta-D-ribosyl)acetamidine + ATP = 5-amino-1-(5-phospho-beta-D-ribosyl)imidazole + ADP + phosphate + H(+). It participates in purine metabolism; IMP biosynthesis via de novo pathway; 5-amino-1-(5-phospho-D-ribosyl)imidazole from N(2)-formyl-N(1)-(5-phospho-D-ribosyl)glycinamide: step 2/2. The protein operates within purine metabolism; IMP biosynthesis via de novo pathway; N(1)-(5-phospho-D-ribosyl)glycinamide from 5-phospho-alpha-D-ribose 1-diphosphate: step 2/2. It functions in the pathway purine metabolism; IMP biosynthesis via de novo pathway; N(2)-formyl-N(1)-(5-phospho-D-ribosyl)glycinamide from N(1)-(5-phospho-D-ribosyl)glycinamide (10-formyl THF route): step 1/1. Trifunctional enzyme that catalyzes three distinct reactions as part of the 'de novo' inosine monophosphate biosynthetic pathway. The sequence is that of Trifunctional purine biosynthetic protein adenosine-3 (GART) from Homo sapiens (Human).